Here is an 825-residue protein sequence, read N- to C-terminus: Probable ATP-dependent RNA helicase DDX20 (825 aa).

The interval proline 27–proline 50 is disordered. The short motif at alanine 63 to leucine 91 is the Q motif element. Residues arginine 85, glutamine 90, alanine 107 to threonine 114, and glycine 110 to cysteine 115 contribute to the ATP site. In terms of domain architecture, Helicase ATP-binding spans isoleucine 94–valine 265. Serine 188 is subject to Phosphoserine. The short motif at aspartate 212–aspartate 215 is the DEAD box element. Position 270 is a phosphoserine (serine 270). The Helicase C-terminal domain occupies histidine 300 to cysteine 449. Composition is skewed to polar residues over residues serine 465–lysine 475 and phenylalanine 484–alanine 504. Disordered regions lie at residues serine 465–leucine 573 and glutamine 642–glutamate 753. A phosphoserine mark is found at serine 472, serine 501, and serine 506. Residues arginine 508–valine 518 are compositionally biased toward basic residues. A compositionally biased stretch (polar residues) spans lysine 547–glycine 571. Threonine 552 is subject to Phosphothreonine. 7 positions are modified to phosphoserine: serine 561, serine 653, serine 655, serine 657, serine 673, serine 678, and serine 679. The span at serine 646–serine 668 shows a compositional bias: low complexity. Residues threonine 689 and threonine 706 each carry the phosphothreonine modification. A compositionally biased stretch (polar residues) spans glutamate 698–glutamate 711. Basic residues predominate over residues lysine 733–serine 744.

Belongs to the DEAD box helicase family. DDX20 subfamily. As to quaternary structure, part of the core SMN complex that contains SMN1, GEMIN2/SIP1, DDX20/GEMIN3, GEMIN4, GEMIN5, GEMIN6, GEMIN7, GEMIN8 and STRAP/UNRIP. Part of the SMN-Sm complex that contains SMN1, GEMIN2/SIP1, DDX20/GEMIN3, GEMIN4, GEMIN5, GEMIN6, GEMIN7, GEMIN8, STRAP/UNRIP and the Sm proteins SNRPB, SNRPD1, SNRPD2, SNRPD3, SNRPE, SNRPF and SNRPG. Interacts with SMN1; the interaction is direct. Interacts with GEMIN4; the interaction is direct. Interacts with GEMIN5. Interacts with SNUPN; the interaction is direct. Interacts with PPP4R2. Interacts with FOXL2. Interacts with NANOS1 and PUM2.

It is found in the cytoplasm. The protein localises to the nucleus. It localises to the gem. The catalysed reaction is ATP + H2O = ADP + phosphate + H(+). It catalyses the reaction a ribonucleoside 5'-triphosphate + H2O = a ribonucleoside 5'-diphosphate + phosphate + H(+). Functionally, the SMN complex catalyzes the assembly of small nuclear ribonucleoproteins (snRNPs), the building blocks of the spliceosome, and thereby plays an important role in the splicing of cellular pre-mRNAs. Most spliceosomal snRNPs contain a common set of Sm proteins SNRPB, SNRPD1, SNRPD2, SNRPD3, SNRPE, SNRPF and SNRPG that assemble in a heptameric protein ring on the Sm site of the small nuclear RNA to form the core snRNP (Sm core). In the cytosol, the Sm proteins SNRPD1, SNRPD2, SNRPE, SNRPF and SNRPG are trapped in an inactive 6S pICln-Sm complex by the chaperone CLNS1A that controls the assembly of the core snRNP. To assemble core snRNPs, the SMN complex accepts the trapped 5Sm proteins from CLNS1A forming an intermediate. Binding of snRNA inside 5Sm triggers eviction of the SMN complex, thereby allowing binding of SNRPD3 and SNRPB to complete assembly of the core snRNP. May also play a role in the metabolism of small nucleolar ribonucleoprotein (snoRNPs). This Mus musculus (Mouse) protein is Probable ATP-dependent RNA helicase DDX20 (Ddx20).